The chain runs to 235 residues: Flavonoid 3',5'-methyltransferase (235 aa).

Residues Val51, Glu73, Gly75–Val76, Ser81, Asp99, and Ala128 contribute to the S-adenosyl-L-methionine site. Asp151 is a binding site for a divalent metal cation. Position 153 (Asp153) interacts with S-adenosyl-L-methionine. The a divalent metal cation site is built by Asp177 and Asn178.

Belongs to the class I-like SAM-binding methyltransferase superfamily. Cation-dependent O-methyltransferase family. CCoAMT subfamily. The cofactor is a divalent metal cation.

It is found in the cytoplasm. The enzyme catalyses S-adenosyl-L-methionine + a 3'-hydroxyflavonoid = S-adenosyl-L-homocysteine + a 3'-methoxyflavonoid.. It carries out the reaction S-adenosyl-L-methionine + a 5'-hydroxy-3'-methoxyflavonoid = S-adenosyl-L-homocysteine + a 3',5'-dimethoxyflavonoid.. It participates in pigment biosynthesis; anthocyanin biosynthesis. Its function is as follows. Mediates O-methylation of anthocyanins. Anthocyanins are major pigments in grapes: at ripening initiation in red grapevine berries, the exocarp turns color from green to red and then to purple due to the accumulation and extent of methylation of anthocyanins. Catalyzes both 3' and 5' O-methylation of anthocyanins, with a preference for glycosylated substrates. Active on both anthocyanins and flavonols in vitro. Most active with delphinidin 3-glucoside but also acts on cyanidin 3-glucoside, cyanidin, myricetin, quercetin and quercetin 3-glucoside. Not able to methylate flavan type skeletons with chiral centers, such as catechins or dihydroquercetin. This chain is Flavonoid 3',5'-methyltransferase (FAOMT), found in Vitis vinifera (Grape).